The sequence spans 139 residues: Endoribonuclease YbeY (139 aa).

Zn(2+)-binding residues include H110, H114, and H120.

Belongs to the endoribonuclease YbeY family. The cofactor is Zn(2+).

The protein localises to the cytoplasm. In terms of biological role, single strand-specific metallo-endoribonuclease involved in late-stage 70S ribosome quality control and in maturation of the 3' terminus of the 16S rRNA. In Thermus thermophilus (strain ATCC BAA-163 / DSM 7039 / HB27), this protein is Endoribonuclease YbeY.